Reading from the N-terminus, the 293-residue chain is Ribosomal RNA small subunit methyltransferase H (293 aa).

S-adenosyl-L-methionine contacts are provided by residues 32–34, D51, F78, D99, and Q106; that span reads GGH. The tract at residues 271–293 is disordered; it reads PGTEEIRENPPSRSAKLRVAKRI.

This sequence belongs to the methyltransferase superfamily. RsmH family.

Its subcellular location is the cytoplasm. It catalyses the reaction cytidine(1402) in 16S rRNA + S-adenosyl-L-methionine = N(4)-methylcytidine(1402) in 16S rRNA + S-adenosyl-L-homocysteine + H(+). Its function is as follows. Specifically methylates the N4 position of cytidine in position 1402 (C1402) of 16S rRNA. In Persephonella marina (strain DSM 14350 / EX-H1), this protein is Ribosomal RNA small subunit methyltransferase H.